The primary structure comprises 159 residues: MPANKKEGLIFGVMMCFGMVCVMSIYNAIINRAIYDFSLMTVFEMVIGFMIALLLDLLLVGPLAKKIAFRMPFDKTKKIYVILAMSTCMVIGMVLCMSVFGLVTAVLANGLNGDSLFSAYLMIVLKNFILAYPLQLLIMGPLVRGVFMKFVKPKLTAAI.

This is an uncharacterized protein from Bacillus subtilis (strain 168).